The sequence spans 757 residues: Transcription regulator rua1 (757 aa).

Disordered regions lie at residues 122 to 169 (SSGS…LPVS), 181 to 218 (NHQV…SNQD), 237 to 295 (RNTG…NGYT), 372 to 393 (SADC…PYPL), and 422 to 582 (MELQ…IGNA). Low complexity predominate over residues 125–165 (SATKSEPSTCSSSTDFSMSSTADASTAPQHSSSGDSSMSSG). 2 stretches are compositionally biased toward polar residues: residues 181-190 (NHQVTTQDAS) and 200-218 (QPPS…SNQD). A compositionally biased stretch (basic residues) spans 240–249 (GHRQHNRHQK). A compositionally biased stretch (polar residues) spans 253 to 277 (LPQGQSCTNSGSSSRQVTRPNSPNH). Positions 379–393 (PRPPSNSPEPHPYPL) are enriched in pro residues. Positions 428–437 (PARSNSTFGR) are enriched in polar residues. The span at 439–453 (SQRHHQPPPSHRQRS) shows a compositional bias: basic residues. Low complexity-rich tracts occupy residues 454–465 (RTSASSISNTNA), 494–510 (ASQS…ATDA), and 543–582 (TSSS…IGNA). A C2H2-type 1 degenerate zinc finger spans residues 661 to 692 (REGWCSLCPQGEWYSMKRSQYLYHMQFDHGIS). Residues 717–750 (GLCHHCNKWIPICFGPQRKRDFKAWFKHARKCHR) form a C2H2-type 2; degenerate zinc finger.

The protein resides in the nucleus. Transcription factor; part of the gene cluster that mediates the biosynthesis of the glycolipid biosurfactant ustilagic acid (UA). UA is a secreted cellobiose glycolipid that is toxic for many microorganisms and confers biocontrol activity to U.maydis. Recognizes and binds to the specific 5'-T/G-G/T-C-G-C-A-T-A/T-C/T-C/T-G/A-3' upstream activating sequence found in all promoters of the UA biosynthesis genes. This is Transcription regulator rua1 from Mycosarcoma maydis (Corn smut fungus).